Consider the following 498-residue polypeptide: 3-octaprenyl-4-hydroxybenzoate carboxy-lyase (498 aa).

Asn-175 serves as a coordination point for Mn(2+). Prenylated FMN contacts are provided by residues 178 to 180 (IYR), 192 to 194 (RWL), and 197 to 198 (RG). Position 241 (Glu-241) interacts with Mn(2+). Residue Asp-290 is the Proton donor of the active site.

It belongs to the UbiD family. As to quaternary structure, homohexamer. It depends on prenylated FMN as a cofactor. Mn(2+) is required as a cofactor.

It is found in the cell membrane. It catalyses the reaction a 4-hydroxy-3-(all-trans-polyprenyl)benzoate + H(+) = a 2-(all-trans-polyprenyl)phenol + CO2. It participates in cofactor biosynthesis; ubiquinone biosynthesis. In terms of biological role, catalyzes the decarboxylation of 3-octaprenyl-4-hydroxy benzoate to 2-octaprenylphenol, an intermediate step in ubiquinone biosynthesis. This is 3-octaprenyl-4-hydroxybenzoate carboxy-lyase from Yersinia pseudotuberculosis serotype I (strain IP32953).